Here is a 287-residue protein sequence, read N- to C-terminus: 4-hydroxybenzoate octaprenyltransferase (287 aa).

6 consecutive transmembrane segments (helical) span residues 41–61 (WPLL…GCAM), 89–109 (WEAI…ILPL), 133–153 (FFAI…PMAF), 158–178 (DTVP…SVAY), 202–224 (FGRF…YVWI), and 267–287 (NNWL…LAGS).

The protein belongs to the UbiA prenyltransferase family. The cofactor is Mg(2+).

Its subcellular location is the cell inner membrane. The catalysed reaction is all-trans-octaprenyl diphosphate + 4-hydroxybenzoate = 4-hydroxy-3-(all-trans-octaprenyl)benzoate + diphosphate. The protein operates within cofactor biosynthesis; ubiquinone biosynthesis. Functionally, catalyzes the prenylation of para-hydroxybenzoate (PHB) with an all-trans polyprenyl group. Mediates the second step in the final reaction sequence of ubiquinone-8 (UQ-8) biosynthesis, which is the condensation of the polyisoprenoid side chain with PHB, generating the first membrane-bound Q intermediate 3-octaprenyl-4-hydroxybenzoate. In Burkholderia lata (strain ATCC 17760 / DSM 23089 / LMG 22485 / NCIMB 9086 / R18194 / 383), this protein is 4-hydroxybenzoate octaprenyltransferase.